Reading from the N-terminus, the 61-residue chain is Photosystem II reaction center protein K (61 aa).

A propeptide spanning residues 1–24 (MLNTFSLIGICLNSTLFSSSFFFG) is cleaved from the precursor. A helical transmembrane segment spans residues 36-56 (IVDIMPVIPLFFFLLAFVWQA).

Belongs to the PsbK family. As to quaternary structure, PSII is composed of 1 copy each of membrane proteins PsbA, PsbB, PsbC, PsbD, PsbE, PsbF, PsbH, PsbI, PsbJ, PsbK, PsbL, PsbM, PsbT, PsbX, PsbY, PsbZ, Psb30/Ycf12, at least 3 peripheral proteins of the oxygen-evolving complex and a large number of cofactors. It forms dimeric complexes.

It is found in the plastid. The protein resides in the chloroplast thylakoid membrane. Functionally, one of the components of the core complex of photosystem II (PSII). PSII is a light-driven water:plastoquinone oxidoreductase that uses light energy to abstract electrons from H(2)O, generating O(2) and a proton gradient subsequently used for ATP formation. It consists of a core antenna complex that captures photons, and an electron transfer chain that converts photonic excitation into a charge separation. This is Photosystem II reaction center protein K from Nicotiana tomentosiformis (Tobacco).